Here is a 511-residue protein sequence, read N- to C-terminus: GMP synthase [glutamine-hydrolyzing] (511 aa).

The 191-residue stretch at 5–195 (DILVLDFGSQ…AKYACNCDSV (191 aa)) folds into the Glutamine amidotransferase type-1 domain. Cys-82 functions as the Nucleophile in the catalytic mechanism. Residues His-169 and Glu-171 contribute to the active site. The GMPS ATP-PPase domain occupies 196 to 386 (WNMGSFAKTQ…LGLSKDVVYR (191 aa)). 223–229 (SGGVDSS) is an ATP binding site.

In terms of assembly, homodimer.

It carries out the reaction XMP + L-glutamine + ATP + H2O = GMP + L-glutamate + AMP + diphosphate + 2 H(+). It participates in purine metabolism; GMP biosynthesis; GMP from XMP (L-Gln route): step 1/1. Catalyzes the synthesis of GMP from XMP. The chain is GMP synthase [glutamine-hydrolyzing] from Campylobacter lari (strain RM2100 / D67 / ATCC BAA-1060).